Consider the following 138-residue polypeptide: Growth factor (138 aa).

Residues M1 to A19 form the signal peptide. Residue N34 is glycosylated (N-linked (GlcNAc...) asparagine; by host). Residues A41–Q81 enclose the EGF-like domain. 3 cysteine pairs are disulfide-bonded: C45–C58, C53–C69, and C71–C80. Residue N95 is glycosylated (N-linked (GlcNAc...) asparagine; by host).

It belongs to the orthopoxvirus OPG019 family.

It localises to the secreted. Stimulates cellular proliferation (hyperplasia)and mobility around infected cells to promote rapid and efficient spread of infection. This chain is Growth factor (OPG019), found in Rabbitpox virus (strain Utrecht) (RPV).